The sequence spans 434 residues: MYKRYKDVSLILKIVIGIIVGAVLGVMVPSWSFIDVLGKLFVGALKAIAPLLVFLLIMSAISKYRSGAKNHFGTVIVLYLSATLFSSIAAVAVSYLFPIKLVLPGAMKIAESAPKDLGTVVTSLLTNAVANPISALVEGNYLAILFWSLLIGSGLRLTSAVTKKVVTELADTVSAVAQNVIQFAPFGIVGLLHESLSKTGVKGVMAYGQLLMLLVATMVFVYLVVYPFMVWLMTRQNPYPLTFWTLKVSGIPAFFTRSGAVNIPINLKASKDLGLNEESYAISIPLGGSANSGGAAITVSIMTLATANTMGVHVSIFLALLLCFLSAISATGVSGIAGGSLLLIPMAASLFGISNDIAMQVVGIGFIIGVVQDSVETAVNSASDLLFTATAEYADDRREGHPVDIRAKVKAAGKGTAEVVTPEKANEAEESEQV.

Helical transmembrane passes span 14–34, 41–61, 72–92, 135–155, 172–192, 210–230, 282–302, 316–336, and 351–371; these read IVIGIIVGAVLGVMVPSWSFI, FVGALKAIAPLLVFLLIMSAI, FGTVIVLYLSATLFSSIAAVA, ALVEGNYLAILFWSLLIGSGL, TVSAVAQNVIQFAPFGIVGLL, LLMLLVATMVFVYLVVYPFMV, ISIPLGGSANSGGAAITVSIM, IFLALLLCFLSAISATGVSGI, and FGISNDIAMQVVGIGFIIGVV. The disordered stretch occupies residues 414 to 434; it reads KGTAEVVTPEKANEAEESEQV.

This sequence belongs to the dicarboxylate/amino acid:cation symporter (DAACS) (TC 2.A.23) family.

It is found in the cell membrane. The catalysed reaction is L-serine(in) + Na(+)(in) = L-serine(out) + Na(+)(out). It catalyses the reaction L-threonine(in) + Na(+)(in) = L-threonine(out) + Na(+)(out). Involved in the import of serine and threonine into the cell, with the concomitant import of sodium (symport system). The sequence is that of Serine/threonine transporter SstT from Lacticaseibacillus paracasei (strain ATCC 334 / BCRC 17002 / CCUG 31169 / CIP 107868 / KCTC 3260 / NRRL B-441) (Lactobacillus paracasei).